A 552-amino-acid polypeptide reads, in one-letter code: Glutamate--tRNA ligase (552 aa).

A 'HIGH' region motif is present at residues 41 to 51; it reads PSPTGFQHIGG. Residues 293 to 297 carry the 'KMSKS' region motif; sequence KLSKR. Lys-296 contacts ATP.

The protein belongs to the class-I aminoacyl-tRNA synthetase family. Glutamate--tRNA ligase type 1 subfamily. As to quaternary structure, monomer.

The protein localises to the cytoplasm. The enzyme catalyses tRNA(Glu) + L-glutamate + ATP = L-glutamyl-tRNA(Glu) + AMP + diphosphate. Functionally, catalyzes the attachment of glutamate to tRNA(Glu) in a two-step reaction: glutamate is first activated by ATP to form Glu-AMP and then transferred to the acceptor end of tRNA(Glu). The protein is Glutamate--tRNA ligase of Clostridium perfringens (strain SM101 / Type A).